The sequence spans 423 residues: Hemoglobinase (423 aa).

An N-terminal signal peptide occupies residues 1–18; sequence MFYSIFFIHILRIVLVDC. Residues 19–29 constitute a propeptide that is removed on maturation; sequence NEYSEENVDDR. Residues histidine 145 and cysteine 186 contribute to the active site. The tract at residues 286 to 307 is disordered; it reads RKKASTEHDEPPMKPKDSIPSR. A propeptide spanning residues 286–423 is cleaved from the precursor; sequence RKKASTEHDE…INGVIRKVCG (138 aa). A compositionally biased stretch (basic and acidic residues) spans 289–305; sequence ASTEHDEPPMKPKDSIP.

This sequence belongs to the peptidase C13 family. Gut.

It catalyses the reaction Hydrolysis of proteins and small molecule substrates at -Asn-|-Xaa- bonds.. This protease is used by the parasite for degradation of the host globin. The protein is Hemoglobinase (HAEM) of Schistosoma japonicum (Blood fluke).